The chain runs to 1212 residues: Periplasmic/secreted acid trehalase ATH1 (1212 aa).

Over 1 to 82 the chain is Cytoplasmic; that stretch reads MGFKDKILFW…STRVKIRRQN (82 aa). The helical transmembrane segment at 83–103 threads the bilayer; it reads ILNTTLILGMLIALVIWTAIL. Over 104–1212 the chain is Periplasmic; sequence STNSYFSSSL…ATIREIVLQE (1109 aa). N-linked (GlcNAc...) asparagine glycans are attached at residues Asn-243, Asn-275, Asn-296, Asn-362, Asn-414, Asn-428, and Asn-521. 546 to 547 is a substrate binding site; the sequence is WD. Residues Asn-572, Asn-601, Asn-661, and Asn-671 are each glycosylated (N-linked (GlcNAc...) asparagine). Residue Glu-677 is the Proton donor of the active site. N-linked (GlcNAc...) asparagine glycosylation is found at Asn-729 and Asn-738. Residue 744–745 participates in substrate binding; it reads KQ. Residues Asn-912, Asn-938, Asn-993, Asn-1011, Asn-1033, Asn-1052, Asn-1070, Asn-1097, and Asn-1165 are each glycosylated (N-linked (GlcNAc...) asparagine).

This sequence belongs to the glycosyl hydrolase 65 family. In terms of assembly, homodimer.

It localises to the secreted. Its subcellular location is the periplasm. The protein localises to the membrane. It catalyses the reaction alpha,alpha-trehalose + H2O = alpha-D-glucose + beta-D-glucose. Periplasmic/secreted acid trehalase that catalyzes hydrolysis of the disaccharide trehalose and required for growth on trehalose as carbon source. Growth on trehalose is not restricted to respiration. The chain is Periplasmic/secreted acid trehalase ATH1 from Candida glabrata (Yeast).